The chain runs to 313 residues: Dimethyladenosine transferase (313 aa).

His37, Leu39, Gly64, Glu85, Asp113, and Asn128 together coordinate S-adenosyl-L-methionine.

The protein belongs to the class I-like SAM-binding methyltransferase superfamily. rRNA adenine N(6)-methyltransferase family. As to quaternary structure, part of the small subunit (SSU) processome, composed of more than 70 proteins and the RNA chaperone small nucleolar RNA (snoRNA) U3.

The protein resides in the nucleus. The protein localises to the nucleoplasm. It localises to the nucleolus. It catalyses the reaction adenosine(1779)/adenosine(1780) in 18S rRNA + 4 S-adenosyl-L-methionine = N(6)-dimethyladenosine(1779)/N(6)-dimethyladenosine(1780) in 18S rRNA + 4 S-adenosyl-L-homocysteine + 4 H(+). In terms of biological role, specifically dimethylates two adjacent adenosines in the loop of a conserved hairpin near the 3'-end of 18S rRNA in the 40S particle. Involved in the pre-rRNA processing steps leading to small-subunit rRNA production independently of its RNA-modifying catalytic activity. Part of the small subunit (SSU) processome, first precursor of the small eukaryotic ribosomal subunit. During the assembly of the SSU processome in the nucleolus, many ribosome biogenesis factors, an RNA chaperone and ribosomal proteins associate with the nascent pre-rRNA and work in concert to generate RNA folding, modifications, rearrangements and cleavage as well as targeted degradation of pre-ribosomal RNA by the RNA exosome. The sequence is that of Dimethyladenosine transferase (Dimt1) from Mus musculus (Mouse).